We begin with the raw amino-acid sequence, 1400 residues long: DNA-directed RNA polymerase subunit beta' (1400 aa).

Cysteine 70, cysteine 72, cysteine 85, and cysteine 88 together coordinate Zn(2+). Residues aspartate 460, aspartate 462, and aspartate 464 each contribute to the Mg(2+) site. Residues cysteine 814, cysteine 888, cysteine 895, and cysteine 898 each contribute to the Zn(2+) site. The segment at 1367–1400 (DRQAKRAEAQEGPSAEQATDNLAALLNAGFSSDE) is disordered.

It belongs to the RNA polymerase beta' chain family. As to quaternary structure, the RNAP catalytic core consists of 2 alpha, 1 beta, 1 beta' and 1 omega subunit. When a sigma factor is associated with the core the holoenzyme is formed, which can initiate transcription. Mg(2+) is required as a cofactor. It depends on Zn(2+) as a cofactor.

The catalysed reaction is RNA(n) + a ribonucleoside 5'-triphosphate = RNA(n+1) + diphosphate. DNA-dependent RNA polymerase catalyzes the transcription of DNA into RNA using the four ribonucleoside triphosphates as substrates. In Vibrio campbellii (strain ATCC BAA-1116), this protein is DNA-directed RNA polymerase subunit beta'.